We begin with the raw amino-acid sequence, 59 residues long: UPF0391 membrane protein AZC_4184 (59 aa).

2 helical membrane-spanning segments follow: residues 4 to 24 and 30 to 50; these read WALTFLVVAIIAAVLGFTAVA and IAKIIFYVAIVLFLISAVMGF.

This sequence belongs to the UPF0391 family.

The protein resides in the cell membrane. This chain is UPF0391 membrane protein AZC_4184, found in Azorhizobium caulinodans (strain ATCC 43989 / DSM 5975 / JCM 20966 / LMG 6465 / NBRC 14845 / NCIMB 13405 / ORS 571).